We begin with the raw amino-acid sequence, 1112 residues long: Mediator of RNA polymerase II transcription subunit 14 (1112 aa).

Disordered stretches follow at residues 1–76, 120–141, and 1088–1112; these read MPGV…INES, SPHG…QSPE, and TNSA…ITID. Residues 20–39 are compositionally biased toward polar residues; sequence SPDNVSSTPFPQERVNQSGD. Positions 64 to 73 are enriched in basic and acidic residues; it reads IETHTGKDGI. Polar residues predominate over residues 1088–1099; that stretch reads TNSAGARSSQQC.

Belongs to the Mediator complex subunit 14 family. In terms of assembly, component of the Mediator complex.

The protein localises to the nucleus. Functionally, component of the Mediator complex, a coactivator involved in the regulated transcription of nearly all RNA polymerase II-dependent genes. Mediator functions as a bridge to convey information from gene-specific regulatory proteins to the basal RNA polymerase II transcription machinery. Mediator is recruited to promoters by direct interactions with regulatory proteins and serves as a scaffold for the assembly of a functional preinitiation complex with RNA polymerase II and the general transcription factors. This chain is Mediator of RNA polymerase II transcription subunit 14 (rgr1), found in Aspergillus clavatus (strain ATCC 1007 / CBS 513.65 / DSM 816 / NCTC 3887 / NRRL 1 / QM 1276 / 107).